Here is a 399-residue protein sequence, read N- to C-terminus: Probable sugar efflux transporter (399 aa).

A run of 12 helical transmembrane segments spans residues 15–35, 50–70, 81–101, 103–123, 136–156, 168–188, 209–229, 246–266, 273–293, 301–321, 333–353, and 364–384; these read VVTL…PVGL, VGMM…PFML, LIGL…AWSF, VLVI…SITS, AQAL…GIPI, MTFL…VKLL, PALV…YTAY, FATV…ILFG, ASGL…LLLP, LMLL…GMQV, VAMS…ALVG, and SIGY…LMIF.

It belongs to the major facilitator superfamily. SotB (TC 2.A.1.2) family.

The protein resides in the cell inner membrane. In terms of biological role, involved in the efflux of sugars. The physiological role may be the reduction of the intracellular concentration of toxic sugars or sugar metabolites. The protein is Probable sugar efflux transporter of Klebsiella pneumoniae (strain 342).